Here is a 154-residue protein sequence, read N- to C-terminus: SsrA-binding protein (154 aa).

It belongs to the SmpB family.

It localises to the cytoplasm. Its function is as follows. Required for rescue of stalled ribosomes mediated by trans-translation. Binds to transfer-messenger RNA (tmRNA), required for stable association of tmRNA with ribosomes. tmRNA and SmpB together mimic tRNA shape, replacing the anticodon stem-loop with SmpB. tmRNA is encoded by the ssrA gene; the 2 termini fold to resemble tRNA(Ala) and it encodes a 'tag peptide', a short internal open reading frame. During trans-translation Ala-aminoacylated tmRNA acts like a tRNA, entering the A-site of stalled ribosomes, displacing the stalled mRNA. The ribosome then switches to translate the ORF on the tmRNA; the nascent peptide is terminated with the 'tag peptide' encoded by the tmRNA and targeted for degradation. The ribosome is freed to recommence translation, which seems to be the essential function of trans-translation. The polypeptide is SsrA-binding protein (Solidesulfovibrio magneticus (strain ATCC 700980 / DSM 13731 / RS-1) (Desulfovibrio magneticus)).